A 686-amino-acid polypeptide reads, in one-letter code: Methionine--tRNA ligase (686 aa).

The 'HIGH' region motif lies at 15-25 (PYANGSIHLGH). The Zn(2+) site is built by cysteine 146, cysteine 149, cysteine 159, and cysteine 162. Positions 332–336 (KMSKS) match the 'KMSKS' region motif. ATP is bound at residue lysine 335. The tRNA-binding domain maps to 585–686 (AFEAVDMRIA…EGAQPGMRVM (102 aa)).

Belongs to the class-I aminoacyl-tRNA synthetase family. MetG type 1 subfamily. As to quaternary structure, homodimer. The cofactor is Zn(2+).

The protein localises to the cytoplasm. The enzyme catalyses tRNA(Met) + L-methionine + ATP = L-methionyl-tRNA(Met) + AMP + diphosphate. In terms of biological role, is required not only for elongation of protein synthesis but also for the initiation of all mRNA translation through initiator tRNA(fMet) aminoacylation. This Aliivibrio salmonicida (strain LFI1238) (Vibrio salmonicida (strain LFI1238)) protein is Methionine--tRNA ligase.